A 519-amino-acid polypeptide reads, in one-letter code: MNLHPHLRHSLLASALLLASGLATAAEPQVIAKELQQAKTYTVASAPIEPLQMDPPKLPDLTGFTAEAVQKKIDRRHKGKVSLRRMFQEDTLKEFVGGDNKAAEWVQRQHGIPQAIFVDDGHVDLTELSKKVPKQYFSEVEPGVYLARLPIVVGQKGILEIDGKVKQLRLSQEGGAFLVNDGKLFVTDTQVTGWREKDNGPATFRSPKEFRPFLLSWGGTETYIVNTKMASFGYAKSKSYGVSISQYTPNMAKRMGRPEPTGWIIGSEFSDMWYGFYCYETQDFVIKDSTYRDNIVYGIDPHDRSHRLIIAGNTVYGTKKKHGIIVSREVNDSWIINNKSYDNKLSGVVIDRNSVNNLVAYNEIYRNHTDGITLYESGDNLIWGNKLVNNRRHGIRVRNSVNIRLYENVAMANGLVGVYGHIKDLSDTDRDIALDPFDTKVSLIVVGGELSANGSGPLSIDSPLSVELYKVSMLAPRKASGISLNGVLGERQDEILDLLVRQQKAVLIDPVERQTEMID.

The first 25 residues, 1–25 (MNLHPHLRHSLLASALLLASGLATA), serve as a signal peptide directing secretion. PbH1 repeat units follow at residues 219–246 (GTET…SISQ), 281–303 (TQDF…DPHD), 305–328 (SHRL…IVSR), 330–352 (VNDS…VIDR), 354–376 (SVNN…TLYE), and 377–399 (SGDN…RVRN). Histidine 302 functions as the Proton acceptor in the catalytic mechanism.

This sequence belongs to the D-mannuronate C5-epimerase family.

It localises to the periplasm. It carries out the reaction [(1-&gt;4)-beta-D-mannuronosyl](n) = [alginate](n). Its pathway is glycan biosynthesis; alginate biosynthesis. Functionally, catalyzes the epimerization of beta-D-mannuronate to alpha-L-guluronate during the synthesis of the linear polysaccharide alginate. In addition, is part of a periplasmic protein complex that protects alginate from degradation by AlgL by channeling the newly formed alginate polymer through a scaffold that transfers the alginate polymer through the periplasmic space to the outer membrane secretin AlgE. The polypeptide is Mannuronan C5-epimerase (algG) (Pseudomonas putida (strain ATCC 47054 / DSM 6125 / CFBP 8728 / NCIMB 11950 / KT2440)).